The primary structure comprises 248 residues: uncharacterized protein (248 aa).

Residues 1-23 form the signal peptide; sequence MLKKIVIGVTATAAFGIGAGALA.

The protein resides in the cell outer membrane. This is an uncharacterized protein from Coxiella burnetii (strain RSA 493 / Nine Mile phase I).